The sequence spans 27 residues: Defensin-like protein 2 (27 aa).

Gln-1 bears the Pyrrolidone carboxylic acid mark.

This sequence belongs to the DEFL family. As to quaternary structure, forms oligomers in its native state.

Its function is as follows. Possesses some antifungal activity sensitive to inorganic cations and antibacterial activity against B.megaterium. This Brassica campestris (Field mustard) protein is Defensin-like protein 2.